The sequence spans 681 residues: Serine/threonine-protein kinase PAK 6 (681 aa).

Disordered stretches follow at residues 1–30 (MFRK…DPKE), 200–256 (QSSP…ESSL), and 268–355 (TAAT…PRTW). The 14-residue stretch at 12 to 25 (ISAPQNFQHRVHTS) folds into the CRIB domain. Residues 26 to 406 (FDPKEGKFVG…VVDQGDPRLL (381 aa)) are linker. 2 stretches are compositionally biased toward low complexity: residues 201–212 (SSPPGASPPTGT) and 268–278 (TAATAPPSSSK). The segment covering 308–333 (SLPSDQPVGTFSPLTTSDTSSPQKSL) has biased composition (polar residues). Positions 407 to 658 (LDSYVKIGEG…AQELLDHPFL (252 aa)) constitute a Protein kinase domain. Residues 413-421 (IGEGSTGIV) and Lys436 each bind ATP. Residue Asp526 is the Proton acceptor of the active site. Position 560 is a phosphoserine; by autocatalysis (Ser560).

This sequence belongs to the protein kinase superfamily. STE Ser/Thr protein kinase family. STE20 subfamily. As to quaternary structure, interacts tightly with GTP-bound but not GDP-bound CDC42/p21 and RAC1. Interacts with the androgen receptor AR. Interacts with IQGAP1 and PPM1B. In terms of processing, autophosphorylated. Phosphorylated by MAP2K6/MAPKK6, leading to PAK6 activation.

It is found in the cytoplasm. Its subcellular location is the nucleus. It carries out the reaction L-seryl-[protein] + ATP = O-phospho-L-seryl-[protein] + ADP + H(+). The catalysed reaction is L-threonyl-[protein] + ATP = O-phospho-L-threonyl-[protein] + ADP + H(+). Functionally, serine/threonine protein kinase that plays a role in the regulation of gene transcription. The kinase activity is induced by various effectors including AR or MAP2K6/MAPKK6. Phosphorylates the DNA-binding domain of androgen receptor/AR and thereby inhibits AR-mediated transcription. Also inhibits ESR1-mediated transcription. May play a role in cytoskeleton regulation by interacting with IQGAP1. May protect cells from apoptosis through phosphorylation of BAD. In Pongo abelii (Sumatran orangutan), this protein is Serine/threonine-protein kinase PAK 6 (PAK6).